The sequence spans 345 residues: Acyl-CoA--sterol O-acyltransferase 1 (345 aa).

The next 9 helical transmembrane spans lie at 1-21 (MASF…TFFI), 32-52 (LILF…IYSL), 54-74 (LLGI…LLFA), 86-106 (PLSL…QLSP), 120-140 (GPLI…AYEY), 148-168 (VVLT…LAAT), 231-251 (ILAA…IFFY), 258-278 (DWKM…EIAI), and 291-311 (AISQ…LFLP).

The protein belongs to the wax synthase family.

The protein localises to the membrane. Functionally, involved in the esterification of cycloartenol. Not implicated in the formation of sterol esters in flowers or during seed maturation. Has a substrate preference toward saturated fatty acyl donors (16:0 &gt; 18:0 &gt; 16:1 &gt; 18:1). Does not require triacyglycerols (TAGs) as a fatty acyl donor, and is unable to acylate diacylglycerol to produce TAG. This is Acyl-CoA--sterol O-acyltransferase 1 (ASAT1) from Arabidopsis thaliana (Mouse-ear cress).